A 254-amino-acid polypeptide reads, in one-letter code: 3-deoxy-manno-octulosonate cytidylyltransferase (254 aa).

Belongs to the KdsB family.

It is found in the cytoplasm. It carries out the reaction 3-deoxy-alpha-D-manno-oct-2-ulosonate + CTP = CMP-3-deoxy-beta-D-manno-octulosonate + diphosphate. It functions in the pathway nucleotide-sugar biosynthesis; CMP-3-deoxy-D-manno-octulosonate biosynthesis; CMP-3-deoxy-D-manno-octulosonate from 3-deoxy-D-manno-octulosonate and CTP: step 1/1. The protein operates within bacterial outer membrane biogenesis; lipopolysaccharide biosynthesis. Activates KDO (a required 8-carbon sugar) for incorporation into bacterial lipopolysaccharide in Gram-negative bacteria. The protein is 3-deoxy-manno-octulosonate cytidylyltransferase of Pseudomonas aeruginosa (strain LESB58).